The primary structure comprises 271 residues: Cobalt import ATP-binding protein CbiO (271 aa).

Residues 2–236 (LATSDLWFRY…TEAMEHAGLT (235 aa)) enclose the ABC transporter domain. An ATP-binding site is contributed by 34–41 (GANGCGKS).

This sequence belongs to the ABC transporter superfamily. Cobalt importer (TC 3.A.1.18.1) family. As to quaternary structure, forms an energy-coupling factor (ECF) transporter complex composed of an ATP-binding protein (A component, CbiO), a transmembrane protein (T component, CbiQ) and 2 possible substrate-capture proteins (S components, CbiM and CbiN) of unknown stoichimetry.

It localises to the cell inner membrane. The protein operates within cofactor biosynthesis; adenosylcobalamin biosynthesis. Its function is as follows. Part of the energy-coupling factor (ECF) transporter complex CbiMNOQ involved in cobalt import. Presumably responsible for energy coupling to the transport system. The chain is Cobalt import ATP-binding protein CbiO from Salmonella typhi.